The chain runs to 216 residues: Ribonuclease HII (216 aa).

The RNase H type-2 domain maps to D28–R216. Positions 34, 35, and 126 each coordinate a divalent metal cation.

It belongs to the RNase HII family. Mn(2+) is required as a cofactor. It depends on Mg(2+) as a cofactor.

It is found in the cytoplasm. It carries out the reaction Endonucleolytic cleavage to 5'-phosphomonoester.. In terms of biological role, endonuclease that specifically degrades the RNA of RNA-DNA hybrids. In Burkholderia vietnamiensis (strain G4 / LMG 22486) (Burkholderia cepacia (strain R1808)), this protein is Ribonuclease HII.